Reading from the N-terminus, the 144-residue chain is Flagellar assembly factor FliW (144 aa).

The protein belongs to the FliW family. Interacts with translational regulator CsrA and flagellin(s).

Its subcellular location is the cytoplasm. In terms of biological role, acts as an anti-CsrA protein, binds CsrA and prevents it from repressing translation of its target genes, one of which is flagellin. Binds to flagellin and participates in the assembly of the flagellum. The polypeptide is Flagellar assembly factor FliW (Geobacillus kaustophilus (strain HTA426)).